Here is a 240-residue protein sequence, read N- to C-terminus: Eukaryotic translation initiation factor 3 subunit J (240 aa).

Positions 19 to 95 (KADVNKWAGE…FANMTPEQQL (77 aa)) are disordered. Positions 28–45 (EDEDDVKDNWEDDDEEEE) are enriched in acidic residues. Residues 46 to 56 (KKDAPKQEDTP) show a composition bias toward basic and acidic residues. Residues 60–71 (AKPKKAAQQKKL) show a composition bias toward basic residues. 2 coiled-coil regions span residues 63 to 90 (KKAA…ANMT) and 176 to 235 (SNNI…DYDD). Positions 72–81 (KKEDLERLQR) are enriched in basic and acidic residues.

Belongs to the eIF-3 subunit J family. Component of the eukaryotic translation initiation factor 3 (eIF-3) complex.

The protein localises to the cytoplasm. Functionally, component of the eukaryotic translation initiation factor 3 (eIF-3) complex, which is involved in protein synthesis of a specialized repertoire of mRNAs and, together with other initiation factors, stimulates binding of mRNA and methionyl-tRNAi to the 40S ribosome. The eIF-3 complex specifically targets and initiates translation of a subset of mRNAs involved in cell proliferation. This chain is Eukaryotic translation initiation factor 3 subunit J, found in Anopheles gambiae (African malaria mosquito).